Reading from the N-terminus, the 212-residue chain is Dephospho-CoA kinase (212 aa).

One can recognise a DPCK domain in the interval 4 to 204; sequence IVALTGGICS…RDYLKAEKTT (201 aa). 12 to 17 is an ATP binding site; that stretch reads CSGKSV.

This sequence belongs to the CoaE family.

The protein resides in the cytoplasm. The catalysed reaction is 3'-dephospho-CoA + ATP = ADP + CoA + H(+). It functions in the pathway cofactor biosynthesis; coenzyme A biosynthesis; CoA from (R)-pantothenate: step 5/5. Catalyzes the phosphorylation of the 3'-hydroxyl group of dephosphocoenzyme A to form coenzyme A. In Blochmanniella pennsylvanica (strain BPEN), this protein is Dephospho-CoA kinase.